Reading from the N-terminus, the 147-residue chain is MNPAHLLVLSAVCVSLLGAANIPPHPLNLKNFMEMIRYTIPCEKTWGEYADYGCYCGAGGSGRPIDALDRCCYVHDNCYGDAETKHKCNPKTQSYSYKLTKRTIICYGAAGTCGRIVCDCDRTAALCFGDSEYIERHKNIDTKRHCQ.

The N-terminal stretch at 1–19 (MNPAHLLVLSAVCVSLLGA) is a signal peptide. The propeptide occupies 20 to 27 (ANIPPHPL). Cystine bridges form between Cys-54–Cys-146, Cys-56–Cys-72, Cys-71–Cys-127, Cys-78–Cys-120, Cys-88–Cys-113, and Cys-106–Cys-118. Residues Tyr-55, Gly-57, and Gly-59 each contribute to the Ca(2+) site. The active site involves His-75. Asp-76 lines the Ca(2+) pocket. Asp-121 is an active-site residue.

This sequence belongs to the phospholipase A2 family. Group I subfamily. D49 sub-subfamily. As to quaternary structure, heterodimer; disulfide-linked. The A chain has phospholipase A2 activity and the B chain shows homology with the basic protease inhibitors. Ca(2+) serves as cofactor. Expressed by the venom gland.

The protein localises to the secreted. The catalysed reaction is a 1,2-diacyl-sn-glycero-3-phosphocholine + H2O = a 1-acyl-sn-glycero-3-phosphocholine + a fatty acid + H(+). Functionally, snake venom phospholipase A2 (PLA2) that shows presynaptic neurotoxicity. The A chain has phospholipase activity. PLA2 catalyzes the calcium-dependent hydrolysis of the 2-acyl groups in 3-sn-phosphoglycerides. The protein is Basic phospholipase A2 beta-bungarotoxin A4 chain of Bungarus candidus (Malayan krait).